The chain runs to 255 residues: Small ribosomal subunit protein uS2 (255 aa).

The interval 231–255 (RLQTGAEEEFSTEGEEVVEETPAEA) is disordered. A compositionally biased stretch (acidic residues) spans 236–255 (AEEEFSTEGEEVVEETPAEA).

Belongs to the universal ribosomal protein uS2 family.

In Citrifermentans bemidjiense (strain ATCC BAA-1014 / DSM 16622 / JCM 12645 / Bem) (Geobacter bemidjiensis), this protein is Small ribosomal subunit protein uS2.